Here is a 199-residue protein sequence, read N- to C-terminus: CASP-like protein 1D2 (199 aa).

The interval 1–27 (MASTENPDPETGKSEPIPASATPPPSS) is disordered. Ala-2 carries the N-acetylalanine modification. Residues 2–36 (ASTENPDPETGKSEPIPASATPPPSSAASFLDCRK) are Cytoplasmic-facing. A helical membrane pass occupies residues 37–57 (IDIITRVLLFSATLTALIVMV). Topologically, residues 58–85 (TSDQTEMTQLPGVSSPAPVSAEFNDSPA) are extracellular. Residues 86 to 106 (FIYFVVALVVASFYALISTLV) form a helical membrane-spanning segment. The Cytoplasmic segment spans residues 107–129 (SISLLLKPEFTAQFSIYLASLDM). A helical transmembrane segment spans residues 130-150 (VMLGILASATGTAGGVAYIAL). Topologically, residues 151–171 (KGNEEVGWNKICNVYDKFCRY) are extracellular. The helical transmembrane segment at 172–192 (IATSLALSLFASLLLLVLSIW) threads the bilayer. Residues 193–199 (SALSKRT) are Cytoplasmic-facing.

It belongs to the Casparian strip membrane proteins (CASP) family. As to quaternary structure, homodimer and heterodimers. Expressed in the root endodermis and flowers.

It localises to the cell membrane. The polypeptide is CASP-like protein 1D2 (Arabidopsis thaliana (Mouse-ear cress)).